The primary structure comprises 222 residues: Probable transaldolase (222 aa).

Residue Lys91 is the Schiff-base intermediate with substrate of the active site.

Belongs to the transaldolase family. Type 3B subfamily.

The protein localises to the cytoplasm. The enzyme catalyses D-sedoheptulose 7-phosphate + D-glyceraldehyde 3-phosphate = D-erythrose 4-phosphate + beta-D-fructose 6-phosphate. The protein operates within carbohydrate degradation; pentose phosphate pathway; D-glyceraldehyde 3-phosphate and beta-D-fructose 6-phosphate from D-ribose 5-phosphate and D-xylulose 5-phosphate (non-oxidative stage): step 2/3. Transaldolase is important for the balance of metabolites in the pentose-phosphate pathway. This Chlorobium limicola (strain DSM 245 / NBRC 103803 / 6330) protein is Probable transaldolase.